We begin with the raw amino-acid sequence, 536 residues long: Signal peptide peptidase-like 5 (536 aa).

Residues M1–T29 form the signal peptide. Residues K30–S186 lie on the Lumenal side of the membrane. In terms of domain architecture, PA spans S94 to S170. 2 N-linked (GlcNAc...) asparagine glycosylation sites follow: N95 and N151. Residues P187 to A207 form a helical membrane-spanning segment. Over S208–E243 the chain is Cytoplasmic. Positions K218 to K238 are disordered. Residues E244–L264 form a helical membrane-spanning segment. Residues V265–S273 are Lumenal-facing. Residues W274–V296 traverse the membrane as a helical segment. Residues T297–N318 lie on the Cytoplasmic side of the membrane. The chain crosses the membrane as a helical span at residues T319–M339. Over N340–S344 the chain is Lumenal. The chain crosses the membrane as a helical span at residues H345–A365. Topologically, residues R366 to T374 are cytoplasmic. The helical transmembrane segment at I375–F395 threads the bilayer. The active site involves D384. The Lumenal portion of the chain corresponds to K396–G428. The chain crosses the membrane as a helical span at residues G429–F449. The active site involves D437. Topologically, residues R450–Y463 are cytoplasmic. The chain crosses the membrane as a helical span at residues F464–V484. The Lumenal segment spans residues M485–G489. The chain crosses the membrane as a helical span at residues Q490–V510. The PAL signature appears at P491 to L493. Residues R511–A536 lie on the Cytoplasmic side of the membrane.

The protein belongs to the peptidase A22B family. Post-translationally, glycosylated.

It is found in the endosome membrane. Functionally, intramembrane-cleaving aspartic protease (I-CLiP) that cleaves type II membrane signal peptides in the hydrophobic plane of the membrane. This chain is Signal peptide peptidase-like 5 (SPPL5), found in Arabidopsis thaliana (Mouse-ear cress).